The following is a 232-amino-acid chain: Large ribosomal subunit protein uL1 (232 aa).

It belongs to the universal ribosomal protein uL1 family. In terms of assembly, part of the 50S ribosomal subunit.

Binds directly to 23S rRNA. The L1 stalk is quite mobile in the ribosome, and is involved in E site tRNA release. Its function is as follows. Protein L1 is also a translational repressor protein, it controls the translation of the L11 operon by binding to its mRNA. This is Large ribosomal subunit protein uL1 from Chlamydia caviae (strain ATCC VR-813 / DSM 19441 / 03DC25 / GPIC) (Chlamydophila caviae).